The primary structure comprises 359 residues: Membrane-bound lytic murein transglycosylase C (359 aa).

A signal peptide spans 1–16 (MKKVLALALIAPLLIS). The N-palmitoyl cysteine moiety is linked to residue Cys17. Cys17 is lipidated: S-diacylglycerol cysteine.

Belongs to the transglycosylase Slt family.

The protein resides in the cell outer membrane. It carries out the reaction Exolytic cleavage of the (1-&gt;4)-beta-glycosidic linkage between N-acetylmuramic acid (MurNAc) and N-acetylglucosamine (GlcNAc) residues in peptidoglycan, from either the reducing or the non-reducing ends of the peptidoglycan chains, with concomitant formation of a 1,6-anhydrobond in the MurNAc residue.. In terms of biological role, murein-degrading enzyme. May play a role in recycling of muropeptides during cell elongation and/or cell division. This is Membrane-bound lytic murein transglycosylase C from Edwardsiella ictaluri (strain 93-146).